The primary structure comprises 396 residues: NADH-quinone oxidoreductase subunit D 1 (396 aa).

This sequence belongs to the complex I 49 kDa subunit family. As to quaternary structure, NDH-1 is composed of 14 different subunits. Subunits NuoB, C, D, E, F, and G constitute the peripheral sector of the complex.

It localises to the cell inner membrane. The catalysed reaction is a quinone + NADH + 5 H(+)(in) = a quinol + NAD(+) + 4 H(+)(out). NDH-1 shuttles electrons from NADH, via FMN and iron-sulfur (Fe-S) centers, to quinones in the respiratory chain. The immediate electron acceptor for the enzyme in this species is believed to be ubiquinone. Couples the redox reaction to proton translocation (for every two electrons transferred, four hydrogen ions are translocated across the cytoplasmic membrane), and thus conserves the redox energy in a proton gradient. This is NADH-quinone oxidoreductase subunit D 1 from Rhizobium etli (strain CIAT 652).